The primary structure comprises 271 residues: Indole-3-glycerol phosphate synthase (271 aa).

Belongs to the TrpC family.

The enzyme catalyses 1-(2-carboxyphenylamino)-1-deoxy-D-ribulose 5-phosphate + H(+) = (1S,2R)-1-C-(indol-3-yl)glycerol 3-phosphate + CO2 + H2O. It participates in amino-acid biosynthesis; L-tryptophan biosynthesis; L-tryptophan from chorismate: step 4/5. The chain is Indole-3-glycerol phosphate synthase from Haloarcula marismortui (strain ATCC 43049 / DSM 3752 / JCM 8966 / VKM B-1809) (Halobacterium marismortui).